The primary structure comprises 295 residues: GTPase Era (295 aa).

The region spanning 5-172 (YCGYAAIIGR…EQAVHQLMPE (168 aa)) is the Era-type G domain. Residues 13–20 (GRPNVGKS) form a G1 region. 13–20 (GRPNVGKS) contributes to the GTP binding site. The tract at residues 39–43 (QTTRY) is G2. The tract at residues 60-63 (DTPG) is G3. Residues 60–64 (DTPGL) and 121–124 (NKVD) each bind GTP. The segment at 121–124 (NKVD) is G4. A G5 region spans residues 151–153 (LSA). Positions 203–279 (LGQEIPYSLA…FLQLWVKVKS (77 aa)) constitute a KH type-2 domain.

This sequence belongs to the TRAFAC class TrmE-Era-EngA-EngB-Septin-like GTPase superfamily. Era GTPase family. Monomer.

The protein resides in the cytoplasm. The protein localises to the cell inner membrane. An essential GTPase that binds both GDP and GTP, with rapid nucleotide exchange. Plays a role in 16S rRNA processing and 30S ribosomal subunit biogenesis and possibly also in cell cycle regulation and energy metabolism. The protein is GTPase Era of Coxiella burnetii (strain CbuK_Q154) (Coxiella burnetii (strain Q154)).